The following is a 61-amino-acid chain: Small ribosomal subunit protein uS14B (61 aa).

Zn(2+)-binding residues include C24, C27, C40, and C43.

The protein belongs to the universal ribosomal protein uS14 family. Zinc-binding uS14 subfamily. As to quaternary structure, part of the 30S ribosomal subunit. Contacts proteins S3 and S10. The cofactor is Zn(2+).

Binds 16S rRNA, required for the assembly of 30S particles and may also be responsible for determining the conformation of the 16S rRNA at the A site. The protein is Small ribosomal subunit protein uS14B of Kineococcus radiotolerans (strain ATCC BAA-149 / DSM 14245 / SRS30216).